A 77-amino-acid chain; its full sequence is UPF0291 protein Bsph_1689 (77 aa).

It belongs to the UPF0291 family.

It localises to the cytoplasm. In Lysinibacillus sphaericus (strain C3-41), this protein is UPF0291 protein Bsph_1689.